Consider the following 455-residue polypeptide: UDP-glycosyltransferase 75B2 (455 aa).

His-16 serves as the catalytic Proton acceptor. An anthocyanidin is bound at residue His-16. The UDP-alpha-D-glucose site is built by Gln-337, His-352, Trp-355, Ser-357, Glu-360, Asp-376, and Gln-377.

The protein belongs to the UDP-glycosyltransferase family.

The enzyme catalyses (indol-3-yl)acetate + UDP-alpha-D-glucose = 1-O-(indol-3-ylacetyl)-beta-D-glucose + UDP. The protein operates within plant hormone metabolism; auxin conjugation. In terms of biological role, possesses low catalytic activity in vitro. Also active as glucosyltransferase in vitro on benzoates and benzoate derivatives. In Arabidopsis thaliana (Mouse-ear cress), this protein is UDP-glycosyltransferase 75B2 (UGT75B2).